Consider the following 400-residue polypeptide: MGFVKILSLSLAATAVADAATILSPRYPNDVIPNEYIVVMKDGVSSASFASHSAWVADMHYYNHTKRALPGHGIQEVYDIYEMKAYSGKFDEDTIQRIAKEPDVAFIEPNQIVTISEISVQKAAPSWGLPRISVKENQLSSNTDYFYDSSAGAGIWVYVVDTGVDIKHPDFEGRAVWGTSTVDRSKTDRLGHGTHVAGTIASKTYGVAKAVKIIAVKVFKDRTTSYKNIIGGIDWAVKHSKKNNMLSKSVVNMSLGGGRSSAMNKAAANAHKTGMFVAVSAGNTPVDAMNFSPASEPLACTVAASDKDDMQAQFSAFGPAVDIFAPGTDIVSLVPRKKFGTKSGTSMAAAHVSGAGAYIMALEKIPGNEVCNRLKELAQSSIVRSSDKTTRKLLYNNSGK.

The first 19 residues, 1-19 (MGFVKILSLSLAATAVADA), serve as a signal peptide directing secretion. Residues 20–116 (ATILSPRYPN…IEPNQIVTIS (97 aa)) constitute a propeptide that is removed on maturation. The Inhibitor I9 domain maps to 36–115 (YIVVMKDGVS…FIEPNQIVTI (80 aa)). Residues 126–400 (SWGLPRISVK…RKLLYNNSGK (275 aa)) enclose the Peptidase S8 domain. Residues aspartate 161 and histidine 192 each act as charge relay system in the active site. Asparagine 252 is a glycosylation site (N-linked (GlcNAc...) asparagine). Serine 346 serves as the catalytic Charge relay system. Asparagine 396 carries N-linked (GlcNAc...) asparagine glycosylation.

It belongs to the peptidase S8 family.

Its subcellular location is the secreted. Its function is as follows. Secreted subtilisin-like serine protease with keratinolytic activity that contributes to pathogenicity. The sequence is that of Subtilisin-like protease CPC735_013700 from Coccidioides posadasii (strain C735) (Valley fever fungus).